Reading from the N-terminus, the 192-residue chain is NADH-quinone oxidoreductase subunit B (192 aa).

[4Fe-4S] cluster is bound by residues Cys71, Cys72, Cys136, and Cys166.

It belongs to the complex I 20 kDa subunit family. As to quaternary structure, NDH-1 is composed of 14 different subunits. Subunits NuoB, C, D, E, F, and G constitute the peripheral sector of the complex. The cofactor is [4Fe-4S] cluster.

It localises to the cell inner membrane. The enzyme catalyses a quinone + NADH + 5 H(+)(in) = a quinol + NAD(+) + 4 H(+)(out). NDH-1 shuttles electrons from NADH, via FMN and iron-sulfur (Fe-S) centers, to quinones in the respiratory chain. The immediate electron acceptor for the enzyme in this species is believed to be ubiquinone. Couples the redox reaction to proton translocation (for every two electrons transferred, four hydrogen ions are translocated across the cytoplasmic membrane), and thus conserves the redox energy in a proton gradient. This Sinorhizobium medicae (strain WSM419) (Ensifer medicae) protein is NADH-quinone oxidoreductase subunit B.